The sequence spans 135 residues: uncharacterized protein (135 aa).

One can recognise an HTH merR-type domain in the interval 2–71; that stretch reads TYTTAKAAEK…LKDIKRFAEC (70 aa). The segment at residues 5 to 24 is a DNA-binding region (H-T-H motif); it reads TAKAAEKIGISAYTLRFYDK.

This is an uncharacterized protein from Haemophilus influenzae (strain ATCC 51907 / DSM 11121 / KW20 / Rd).